The following is a 92-amino-acid chain: MKTLLLTLVVVTIVCLDLGDSLICYLGYNNPQTCAPGQNLCYTKKWCDAFCLQRGKVIQLGCAATCPTTKPYEEVTCCSRDKCNPHPAQRSR.

The signal sequence occupies residues Met1–Ser21. 5 disulfide bridges follow: Cys24–Cys41, Cys34–Cys62, Cys47–Cys51, Cys66–Cys77, and Cys78–Cys83.

This sequence belongs to the three-finger toxin family. Long-chain subfamily. Type II alpha-neurotoxin sub-subfamily. In terms of tissue distribution, expressed by the venom gland.

The protein resides in the secreted. In terms of biological role, binds with high affinity to muscular (alpha-1/CHRNA1) and neuronal (alpha-7/CHRNA7) nicotinic acetylcholine receptor (nAChR) and inhibits acetylcholine from binding to the receptor, thereby impairing neuromuscular and neuronal transmission. In Drysdalia coronoides (White-lipped snake), this protein is Long neurotoxin 469.